We begin with the raw amino-acid sequence, 577 residues long: MSHQPLSCLTEKEDSPSESTGNGPPHLAHPNLDTFTPEELLQQMKELLTENHQLKEAMKLNNQAMKGRFEELSAWTEKQKEERQFFEIQSKEAKERLMALSHENEKLKEELGKLKGKSERSSEDPTDDSRLPRAEAEQEKDQLRTQVVRLQAEKADLLGIVSELQLKLNSSGSSEDSFVEIRMAEGEAEGSVKEIKHSPGPTRTVSTGTALSKYRSRSADGAKNYFEHEELTVSQLLLCLREGNQKVERLEVALKEAKERVSDFEKKTSNRSEIETQTEGSTEKENDEEKGPETVGSEVEALNLQVTSLFKELQEAHTKLSEAELMKKRLQEKCQALERKNSAIPSELNEKQELVYTNKKLELQVESMLSEIKMEQAKTEDEKSKLTVLQMTHNKLLQEHNNALKTIEELTRKESEKVDRAVLKELSEKLELAEKALASKQLQMDEMKQTIAKQEEDLETMTILRAQMEVYCSDFHAERAAREKIHEEKEQLALQLAVLLKENDAFEDGGRQSLMEMQSRHGARTSDSDQQAYLVQRGAEDRDWRQQRNIPIHSCPKCGEVLPDIDTLQIHVMDCII.

2 disordered regions span residues 1–32 (MSHQPLSCLTEKEDSPSESTGNGPPHLAHPNL) and 101–143 (SHEN…KDQL). Positions 38-170 (EELLQQMKEL…VSELQLKLNS (133 aa)) form a coiled coil. An interaction with Rab8 region spans residues 58–209 (MKLNNQAMKG…GPTRTVSTGT (152 aa)). The LIR motif lies at 176–181 (DSFVEI). Ser177 is modified (phosphoserine; by TBK1). Residues 186–197 (GEAEGSVKEIKH) are compositionally biased toward basic and acidic residues. Disordered stretches follow at residues 186–209 (GEAEGSVKEIKHSPGPTRTVSTGT) and 261–297 (VSDFEKKTSNRSEIETQTEGSTEKENDEEKGPETVGS). At Ser198 the chain carries Phosphoserine. A coiled-coil region spans residues 239 to 508 (CLREGNQKVE…LLKENDAFED (270 aa)). 2 stretches are compositionally biased toward basic and acidic residues: residues 261-274 (VSDFEKKTSNRSEI) and 281-292 (STEKENDEEKGP). Ser342 carries the post-translational modification Phosphoserine. Positions 411–577 (TRKESEKVDR…LQIHVMDCII (167 aa)) are interaction with HD. An interaction with MYO6 region spans residues 412–520 (RKESEKVDRA…RQSLMEMQSR (109 aa)). The UBAN motif lies at 474-479 (DFHAER). Ser526 carries the post-translational modification Phosphoserine. The CCHC NOA-type zinc finger occupies 547-577 (QRNIPIHSCPKCGEVLPDIDTLQIHVMDCII). Zn(2+) is bound by residues Cys555, Cys558, His571, and Cys575.

Self-associates. Interacts with HD. Interacts with GTF3A. Interacts with MYO6. Interacts (via UBAN) with ubiquitinated TFRC. Interacts with GTP-bound Rab8 (RAB8A and/or RAB8B). Interacts with TBC1D17. Interacts with TBK1. Interacts with TRAF3. Binds to linear ubiquitin chains. Interacts with LC3 family members MAP1LC3A, MAP1LC3B, GABARAP, GABARAPL1 and GABARAPL2; OPTN phosphorylation increases the association (at least with MAP1LC3B). Interacts with RAB12; the interaction may be indirect. Interacts with TBK1; this interaction leads to the Golgi localization of TBK1 and its subsequent activation. Interacts with palmitoyltransferase ZDHHC17/HIP14; the interaction does not lead to palmitoylation of OPTN. Interacts with CYLD. Interacts with TOM1; the interaction is indirect and is mediated by MYO6, which acts as a bridge between TOM1 and OPTN. Interacts with USP12; the interaction is independent of USP12 deubiquitinase activity and may be involved in regulation of autophagic flux. In terms of assembly, (Microbial infection) Interacts with E3 14.7 kDa protein of group C human adenovirus. Interacts with Bluetongue virus protein NS3. Post-translationally, phosphorylated by TBK1, leading to restrict bacterial proliferation in case of infection. Phosphorylation is induced by phorbol esters and decreases its half-time. Present in aqueous humor of the eye (at protein level). Expressed in the trabecular meshwork (at protein level). Expressed in nonpigmented ciliary epithelium (at protein level). Expressed at high levels in skeletal muscle, also detected in heart, brain, pancreas, kidney, placenta and liver. Expressed in dermal fibroblasts (at protein level).

It is found in the cytoplasm. The protein localises to the perinuclear region. It localises to the golgi apparatus. Its subcellular location is the trans-Golgi network. The protein resides in the cytoplasmic vesicle. It is found in the autophagosome. The protein localises to the recycling endosome. Functionally, plays an important role in the maintenance of the Golgi complex, in membrane trafficking, in exocytosis, through its interaction with myosin VI and Rab8. Links myosin VI to the Golgi complex and plays an important role in Golgi ribbon formation. Plays a role in the activation of innate immune response during viral infection. Mechanistically, recruits TBK1 at the Golgi apparatus, promoting its trans-phosphorylation after RLR or TLR3 stimulation. In turn, activated TBK1 phosphorylates its downstream partner IRF3 to produce IFN-beta/IFNB1. Plays a neuroprotective role in the eye and optic nerve. May act by regulating membrane trafficking and cellular morphogenesis via a complex that contains Rab8 and huntingtin (HD). Mediates the interaction of Rab8 with the probable GTPase-activating protein TBC1D17 during Rab8-mediated endocytic trafficking, such as that of transferrin receptor (TFRC/TfR); regulates Rab8 recruitment to tubules emanating from the endocytic recycling compartment. Autophagy receptor that interacts directly with both the cargo to become degraded and an autophagy modifier of the MAP1 LC3 family; targets ubiquitin-coated bacteria (xenophagy), such as cytoplasmic Salmonella enterica, and appears to function in the same pathway as SQSTM1 and CALCOCO2/NDP52. In terms of biological role, (Microbial infection) May constitute a cellular target for various viruses, such as adenovirus E3 14.7 or Bluetongue virus, to inhibit innate immune response. During RNA virus infection, such as that of Sendai virus, negatively regulates the induction of IFNB1. In Homo sapiens (Human), this protein is Optineurin (OPTN).